A 373-amino-acid chain; its full sequence is 3 beta-hydroxysteroid dehydrogenase/Delta 5--&gt;4-isomerase type 1 (373 aa).

NADP(+)-binding positions include 10–15 (GAGGFL), Tyr155, and Lys159. Lys159 functions as the Proton donor in the catalytic mechanism. A helical transmembrane segment spans residues 288–308 (VALLYWLGFLLELVSFLLRPV).

Belongs to the 3-beta-HSD family. In terms of tissue distribution, high levels in adrenal gland, kidney and male liver. Low levels in female liver.

It is found in the endoplasmic reticulum membrane. The protein localises to the mitochondrion membrane. It catalyses the reaction a 3beta-hydroxy-Delta(5)-steroid + NAD(+) = a 3-oxo-Delta(5)-steroid + NADH + H(+). The catalysed reaction is pregnenolone + NAD(+) = pregn-5-ene-3,20-dione + NADH + H(+). It carries out the reaction 3beta-hydroxyandrost-5-en-17-one + NAD(+) = androst-5-ene-3,17-dione + NADH + H(+). The enzyme catalyses androst-5-en-3beta,17beta-diol + NAD(+) = 17beta-hydroxy-androst-5-en-3-one + NADH + H(+). It catalyses the reaction a 3beta-hydroxysteroid + NADP(+) = a 3-oxosteroid + NADPH + H(+). The catalysed reaction is 5alpha-androstane-3beta,17beta-diol + NADP(+) = 17beta-hydroxy-5alpha-androstan-3-one + NADPH + H(+). It carries out the reaction 3beta-hydroxy-5alpha-androstan-17-one + NADP(+) = 5alpha-androstan-3,17-dione + NADPH + H(+). The enzyme catalyses a 3-oxo-Delta(5)-steroid = a 3-oxo-Delta(4)-steroid. It catalyses the reaction pregn-5-ene-3,20-dione = progesterone. The catalysed reaction is androst-5-ene-3,17-dione = androst-4-ene-3,17-dione. It carries out the reaction 17beta-hydroxy-androst-5-en-3-one = testosterone. The enzyme catalyses 5alpha-androstane-3beta,17beta-diol + NAD(+) = 17beta-hydroxy-5alpha-androstan-3-one + NADH + H(+). It participates in steroid hormone biosynthesis. The protein operates within steroid metabolism. A bifunctional enzyme responsible for the oxidation and isomerization of 3beta-hydroxy-Delta(5)-steroid precursors to 3-oxo-Delta(4)-steroids, an essential step in steroid hormone biosynthesis. Specifically catalyzes the conversion of pregnenolone to progesterone, 17alpha-hydroxypregnenolone to 17alpha-hydroxyprogesterone, dehydroepiandrosterone (DHEA) to 4-androstenedione, and androstenediol to testosterone. Additionally, catalyzes the interconversion between 3beta-hydroxy and 3-oxo-5alpha-androstane steroids controlling the bioavalability of the active forms. Specifically converts dihydrotestosterone to its inactive form 5alpha-androstanediol, that does not bind androgen receptor/AR. Also converts androstanedione, a precursor of testosterone and estrone, to epiandrosterone. Expected to use NAD(+) as preferred electron donor for the 3-beta-hydroxy-steroid dehydrogenase activity and NADPH for the 3-ketosteroid reductase activity. In Mesocricetus auratus (Golden hamster), this protein is 3 beta-hydroxysteroid dehydrogenase/Delta 5--&gt;4-isomerase type 1 (HSD3B1).